The following is a 380-amino-acid chain: M-protease (380 aa).

The N-terminal stretch at 1-27 (MKKPLGKIVASTALLISVAFSSSIASA) is a signal peptide. Residues 28–111 (AEEAKEKYLI…IEEDAEVTTM (84 aa)) constitute a propeptide that is removed on maturation. Positions 34–111 (KYLIGFNEQE…IEEDAEVTTM (78 aa)) constitute an Inhibitor I9 domain. Position 113 (Q113) interacts with Ca(2+). One can recognise a Peptidase S8 domain in the interval 116-379 (PWGISRVQAP…SGLVNAEAAT (264 aa)). The active-site Charge relay system is the D143. Residue D151 coordinates Ca(2+). Catalysis depends on H173, which acts as the Charge relay system. Positions 184, 186, 188, 190, 274, 276, 279, and 302 each coordinate Ca(2+). S326 acts as the Charge relay system in catalysis.

This sequence belongs to the peptidase S8 family. As to quaternary structure, monomer. It depends on Ca(2+) as a cofactor.

The protein resides in the secreted. With respect to regulation, activity is inhibited by phenylmethylsulfonyl fluoride and chymostatin. Functionally, alkaline serine protease that cleaves various substrates, including N-succinyl-Ala-Ala-Pro-Phe-pNA, N-succinyl-Ala-Ala-Pro-MetpNA, oxidized insulin B chain, casein, hemoglobin and scleroproteins, such as keratin, alpha-keratin and elastin. The protein is M-protease (aprE) of Shouchella clausii (strain KSM-K16) (Alkalihalobacillus clausii).